Consider the following 389-residue polypeptide: S-adenosylmethionine synthase (389 aa).

H17 serves as a coordination point for ATP. Position 19 (D19) interacts with Mg(2+). E45 contributes to the K(+) binding site. E58 and Q101 together coordinate L-methionine. Residues 101–111 are flexible loop; it reads QSPDISQGVTE. ATP-binding positions include 168 to 170, 234 to 235, D243, 249 to 250, A266, and K270; these read DSK, RF, and RK. Residue D243 participates in L-methionine binding. Residue K274 participates in L-methionine binding.

It belongs to the AdoMet synthase family. As to quaternary structure, homotetramer; dimer of dimers. Requires Mg(2+) as cofactor. The cofactor is K(+).

The protein localises to the cytoplasm. The enzyme catalyses L-methionine + ATP + H2O = S-adenosyl-L-methionine + phosphate + diphosphate. It functions in the pathway amino-acid biosynthesis; S-adenosyl-L-methionine biosynthesis; S-adenosyl-L-methionine from L-methionine: step 1/1. In terms of biological role, catalyzes the formation of S-adenosylmethionine (AdoMet) from methionine and ATP. The overall synthetic reaction is composed of two sequential steps, AdoMet formation and the subsequent tripolyphosphate hydrolysis which occurs prior to release of AdoMet from the enzyme. This chain is S-adenosylmethionine synthase, found in Geobacter metallireducens (strain ATCC 53774 / DSM 7210 / GS-15).